We begin with the raw amino-acid sequence, 331 residues long: MNAPHMNDTAADAATLDDAAAPAGRPALTRREQKEAYENNKLFKRIVRQVGQAIGDYNMIEQGDKVMVCLSGGKDSYAMLDVLLRLRERAPIDFDIVAVNLDQKQPGFPEHVLPEYLKQVGVPFHIENQDTYSIVKRLVPEGKTTCSLCSRLRRGILYRVAGELGATKIALGHHRDDIVQTLLLNMFYGGKLKGMPPKLQSDDGKNIVIRPLAYVKETDLEKYAELREFPIIPCNLCGSQPNLKRAEMKALIRDWDKRFPGRVDNMFNALAKVVPSHLMDTTLYPFQSLRATGEADPQGDIAFDEEPCASGDDAAAPGAAQPISIVQFDDL.

The interval 1 to 33 (MNAPHMNDTAADAATLDDAAAPAGRPALTRREQ) is disordered. Low complexity predominate over residues 8–23 (DTAADAATLDDAAAPA). The short motif at 71–76 (SGGKDS) is the PP-loop motif element. Positions 146, 149, and 237 each coordinate [4Fe-4S] cluster.

The protein belongs to the TtcA family. As to quaternary structure, homodimer. The cofactor is Mg(2+). [4Fe-4S] cluster serves as cofactor.

It localises to the cytoplasm. It catalyses the reaction cytidine(32) in tRNA + S-sulfanyl-L-cysteinyl-[cysteine desulfurase] + AH2 + ATP = 2-thiocytidine(32) in tRNA + L-cysteinyl-[cysteine desulfurase] + A + AMP + diphosphate + H(+). It functions in the pathway tRNA modification. In terms of biological role, catalyzes the ATP-dependent 2-thiolation of cytidine in position 32 of tRNA, to form 2-thiocytidine (s(2)C32). The sulfur atoms are provided by the cysteine/cysteine desulfurase (IscS) system. The chain is tRNA-cytidine(32) 2-sulfurtransferase from Burkholderia orbicola (strain MC0-3).